An 82-amino-acid polypeptide reads, in one-letter code: Cytochrome b559 subunit alpha (82 aa).

A helical transmembrane segment spans residues 21–35 (VIHSITIPALFIAGW). Heme is bound at residue His23.

It belongs to the PsbE/PsbF family. As to quaternary structure, heterodimer of an alpha subunit and a beta subunit. PSII is composed of 1 copy each of membrane proteins PsbA, PsbB, PsbC, PsbD, PsbE, PsbF, PsbH, PsbI, PsbJ, PsbK, PsbL, PsbM, PsbT, PsbX, PsbY, PsbZ, Psb30/Ycf12, peripheral proteins PsbO, CyanoQ (PsbQ), PsbU, PsbV and a large number of cofactors. It forms dimeric complexes. Heme b serves as cofactor.

It is found in the cellular thylakoid membrane. Its function is as follows. This b-type cytochrome is tightly associated with the reaction center of photosystem II (PSII). PSII is a light-driven water:plastoquinone oxidoreductase that uses light energy to abstract electrons from H(2)O, generating O(2) and a proton gradient subsequently used for ATP formation. It consists of a core antenna complex that captures photons, and an electron transfer chain that converts photonic excitation into a charge separation. The protein is Cytochrome b559 subunit alpha of Nostoc punctiforme (strain ATCC 29133 / PCC 73102).